Here is a 246-residue protein sequence, read N- to C-terminus: NAD(P)H-quinone oxidoreductase subunit K, organellar chromatophore (246 aa).

[4Fe-4S] cluster contacts are provided by Cys58, Cys59, Cys123, and Cys154.

The protein belongs to the complex I 20 kDa subunit family. As to quaternary structure, NDH-1 is composed of 14 different subunits. Subunits nuoB, C, D, E, F, and G constitute the peripheral sector of the complex. The cofactor is [4Fe-4S] cluster.

The protein resides in the plastid. It is found in the organellar chromatophore thylakoid membrane. The enzyme catalyses a quinone + NADH + H(+) = a quinol + NAD(+). Functionally, NDH-1 shuttles electrons from NADH, via FMN and iron-sulfur (Fe-S) centers, to quinones in the respiratory chain. Couples the redox reaction to proton translocation (for every two electrons transferred, four hydrogen ions are translocated across the cytoplasmic membrane), and thus conserves the redox energy in a proton gradient. The polypeptide is NAD(P)H-quinone oxidoreductase subunit K, organellar chromatophore (Paulinella chromatophora).